The sequence spans 166 residues: uncharacterized protein (166 aa).

A disordered region spans residues 28-55 (SRQVHPPWPVPCKSKLQEQDSSESKESK). Residues 42 to 55 (KLQEQDSSESKESK) show a composition bias toward basic and acidic residues. The 97-residue stretch at 67–163 (QNAMLYIENN…NYTPKQFKRT (97 aa)) folds into the HTH araC/xylS-type domain. 2 consecutive DNA-binding regions (H-T-H motif) follow at residues 84–105 (DTVA…KLAT) and 130–153 (VTET…KKRT).

This is an uncharacterized protein from Pseudoalteromonas carrageenovora (Alteromonas carrageenovora).